The following is a 92-amino-acid chain: RQC P-site tRNA stabilizing factor (92 aa).

Positions 5–65 constitute an S4 RNA-binding domain; the sequence is MRLDKYLKVS…GPKIVTAKIE (61 aa).

Belongs to the RqcP family. In terms of assembly, associates with stalled 50S ribosomal subunits. Binds to RqcH, 23S rRNA and the P-site tRNA. Does not require RqcH for association with 50S subunits.

In terms of biological role, key component of the ribosome quality control system (RQC), a ribosome-associated complex that mediates the extraction of incompletely synthesized nascent chains from stalled ribosomes and their subsequent degradation. RqcH recruits Ala-charged tRNA, and with RqcP directs the elongation of stalled nascent chains on 50S ribosomal subunits, leading to non-templated C-terminal alanine extensions (Ala tail). The Ala tail promotes nascent chain degradation. RqcP is associated with the translocation-like movement of the peptidyl-tRNA from the A-site into the P-site. This is RQC P-site tRNA stabilizing factor from Listeria monocytogenes serovar 1/2a (strain ATCC BAA-679 / EGD-e).